Reading from the N-terminus, the 153-residue chain is Putative tRNA (cytidine(34)-2'-O)-methyltransferase (153 aa).

Residues Gly-102, Ile-122, and Ser-131 each contribute to the S-adenosyl-L-methionine site.

The protein belongs to the class IV-like SAM-binding methyltransferase superfamily. RNA methyltransferase TrmH family. TrmL subfamily.

It localises to the cytoplasm. The catalysed reaction is cytidine(34) in tRNA + S-adenosyl-L-methionine = 2'-O-methylcytidine(34) in tRNA + S-adenosyl-L-homocysteine + H(+). It catalyses the reaction 5-carboxymethylaminomethyluridine(34) in tRNA(Leu) + S-adenosyl-L-methionine = 5-carboxymethylaminomethyl-2'-O-methyluridine(34) in tRNA(Leu) + S-adenosyl-L-homocysteine + H(+). Could methylate the ribose at the nucleotide 34 wobble position in tRNA. The polypeptide is Putative tRNA (cytidine(34)-2'-O)-methyltransferase (Synechocystis sp. (strain ATCC 27184 / PCC 6803 / Kazusa)).